We begin with the raw amino-acid sequence, 275 residues long: COP9 signalosome complex subunit 7a (275 aa).

The residue at position 2 (S2) is an N-acetylserine. The PCI domain occupies 2–159 (SAEVKVTGQN…QRLEVDYSIG (158 aa)). The stretch at 185-233 (LSGIEEQVSRANQHKEQQLGLKQQIESEVANLKKTIKVTTAAAAAATSQ) forms a coiled coil. The interval 227 to 275 (AAAATSQDPEQHLTELREPAPGTNQRQPSKKASKGKGLRGSAKIWSKSN) is disordered. The span at 235–244 (PEQHLTELRE) shows a compositional bias: basic and acidic residues. Basic residues predominate over residues 254–263 (PSKKASKGKG).

It belongs to the CSN7/EIF3M family. CSN7 subfamily. Component of the CSN complex, composed of COPS1/GPS1, COPS2, COPS3, COPS4, COPS5, COPS6, COPS7 (COPS7A or COPS7B), COPS8 and COPS9. In the complex, it probably interacts directly with COPS1, COPS2, COPS4, COPS5, COPS6 and COPS8. Interacts with PMF1. Interacts with the translation initiation factor EIF3S6. Interacts with CK2 and PKD. Interacts directly with ID3. Phosphorylated by CK2 and PKD kinases.

The protein localises to the cytoplasm. It is found in the nucleus. Functionally, component of the COP9 signalosome complex (CSN), a complex involved in various cellular and developmental processes. The CSN complex is an essential regulator of the ubiquitin (Ubl) conjugation pathway by mediating the deneddylation of the cullin subunits of SCF-type E3 ligase complexes, leading to decrease the Ubl ligase activity of SCF-type complexes such as SCF, CSA or DDB2. The complex is also involved in phosphorylation of p53/TP53, JUN, I-kappa-B-alpha/NFKBIA, ITPK1 and IRF8/ICSBP, possibly via its association with CK2 and PKD kinases. CSN-dependent phosphorylation of TP53 and JUN promotes and protects degradation by the Ubl system, respectively. The sequence is that of COP9 signalosome complex subunit 7a (COPS7A) from Pongo abelii (Sumatran orangutan).